The primary structure comprises 663 residues: Transketolase 2 (663 aa).

Substrate is bound at residue H25. Thiamine diphosphate-binding positions include H65 and 113 to 115; that span reads GPL. D154 contributes to the Mg(2+) binding site. Residues G155 and N184 each coordinate thiamine diphosphate. Mg(2+) contacts are provided by N184 and I186. 3 residues coordinate substrate: H259, R356, and S383. H259 contacts thiamine diphosphate. E410 (proton donor) is an active-site residue. F436 contributes to the thiamine diphosphate binding site. Positions 460, 468, and 519 each coordinate substrate.

Belongs to the transketolase family. In terms of assembly, homodimer. Mg(2+) is required as a cofactor. Ca(2+) serves as cofactor. It depends on Mn(2+) as a cofactor. The cofactor is Co(2+). Requires thiamine diphosphate as cofactor.

The catalysed reaction is D-sedoheptulose 7-phosphate + D-glyceraldehyde 3-phosphate = aldehydo-D-ribose 5-phosphate + D-xylulose 5-phosphate. Its function is as follows. Catalyzes the transfer of a two-carbon ketol group from a ketose donor to an aldose acceptor, via a covalent intermediate with the cofactor thiamine pyrophosphate. In Vibrio vulnificus (strain CMCP6), this protein is Transketolase 2 (tkt2).